A 311-amino-acid polypeptide reads, in one-letter code: Aquaporin Lacbi1:392091 (311 aa).

Residues 1–16 (MHPQVASLFDNVYEDL) are Cytoplasmic-facing. Residues 17 to 37 (AAATLEFIGTAFFLLFGLGGI) traverse the membrane as a helical segment. Residues 38–56 (QASTAEDTASGQPPASGIE) are Extracellular-facing. A helical membrane pass occupies residues 57 to 77 (HVLYISTCMGLSLVVSAWLFF). Residue Arg-78 is a topological domain, cytoplasmic. Residues 79-99 (VTGGLFNPNISFALLLVGGLK) traverse the membrane as a helical segment. The NPA 1 motif lies at 85-87 (NPN). Residue Pro-100 is a topological domain, extracellular. A helical membrane pass occupies residues 101-121 (LRFVLFCIAQLTGAIAGAAIV). The Cytoplasmic portion of the chain corresponds to 122-143 (RGLTSAPLSVNNVLQQGTSAAQ). A helical membrane pass occupies residues 144 to 164 (GVFIEMFITAALVLSVLMLAA). At 165–168 (EKHE) the chain is on the extracellular side. The helical transmembrane segment at 169–189 (ATPFAPVGIGLTLFACHLFAV) threads the bilayer. Residues 190–215 (YYTGAAMNSARAFGPAVISGFPEPQH) are Cytoplasmic-facing. Residues 197-199 (NSA) carry the NPA 2 motif. Residues 216 to 236 (WVYWVGPFLGSLLGAGFYATL) traverse the membrane as a helical segment. The Extracellular portion of the chain corresponds to 237–311 (KHYKYWHLNP…TSSRTNFSPV (75 aa)). A disordered region spans residues 276-311 (DEETRNGCASNEEGVRATGDEKSSNATSSRTNFSPV). Positions 288-298 (EGVRATGDEKS) are enriched in basic and acidic residues. Polar residues predominate over residues 299 to 311 (SNATSSRTNFSPV). Asn-300 carries N-linked (GlcNAc...) asparagine glycosylation.

This sequence belongs to the MIP/aquaporin (TC 1.A.8) family.

The protein localises to the membrane. It catalyses the reaction H2O(in) = H2O(out). The catalysed reaction is NH4(+)(in) = NH4(+)(out). In terms of biological role, water channel required to facilitate the transport of water across membranes. Also enables low but statistically significant ammonium permeability. May be involved in fungal nitrogen (ammonium) support of the plant host in symbiosis. The polypeptide is Aquaporin Lacbi1:392091 (Laccaria bicolor (strain S238N-H82 / ATCC MYA-4686) (Bicoloured deceiver)).